We begin with the raw amino-acid sequence, 206 residues long: LOB domain-containing protein 2 (206 aa).

The disordered stretch occupies residues 1–20 (MMQRNSNNTSITSNISNNSS). The region spanning 23-123 (QACASCKHQR…KSLVHNQPLI (101 aa)) is the LOB domain.

It belongs to the LOB domain-containing protein family.

This chain is LOB domain-containing protein 2 (LBD2), found in Arabidopsis thaliana (Mouse-ear cress).